The chain runs to 229 residues: ADP-ribosylation factor-like protein 6-interacting protein 4 (229 aa).

Residues 1 to 20 (MAHVGSRKRSRSRSRSRSGR) show a composition bias toward basic residues. The disordered stretch occupies residues 1–152 (MAHVGSRKRS…EDNDGPVLTD (152 aa)). Residues 21–35 (RGSEKRSKRSSKDAS) show a composition bias toward basic and acidic residues. The span at 66–87 (SRSSSTSSSSSSSSSASSSSSS) shows a compositional bias: low complexity. Basic residues predominate over residues 90 to 117 (RKKRAKHKEKKRKKKKKKRKKKLKKRVK). Phosphoserine occurs at positions 140 and 174. A Glycyl lysine isopeptide (Lys-Gly) (interchain with G-Cter in SUMO2) cross-link involves residue K191.

This sequence belongs to the ARL6IP4 family. As to quaternary structure, interacts with ZCCHC17. Interacts with SRSF2. Interacts with ARL6. Widely expressed. Expressed at high level in testis and thymus.

It is found in the nucleus. The protein localises to the nucleolus. Its subcellular location is the nucleus speckle. Its function is as follows. Involved in modulating alternative pre-mRNA splicing with either 5' distal site activation or preferential use of 3' proximal site. The chain is ADP-ribosylation factor-like protein 6-interacting protein 4 (Arl6ip4) from Mus musculus (Mouse).